The chain runs to 176 residues: Nascent polypeptide-associated complex subunit alpha (176 aa).

Positions Ser14–Leu78 constitute an NAC-A/B domain. Positions Leu85–Val127 are disordered. The UBA domain occupies Leu137–Gly176.

This sequence belongs to the NAC-alpha family. Part of the nascent polypeptide-associated complex (NAC), consisting of EGD2 and EGD1. NAC associates with ribosomes via EGD1.

The protein resides in the cytoplasm. The protein localises to the nucleus. Component of the nascent polypeptide-associated complex (NAC), a dynamic component of the ribosomal exit tunnel, protecting the emerging polypeptides from interaction with other cytoplasmic proteins to ensure appropriate nascent protein targeting. The NAC complex also promotes mitochondrial protein import by enhancing productive ribosome interactions with the outer mitochondrial membrane and blocks the inappropriate interaction of ribosomes translating non-secretory nascent polypeptides with translocation sites in the membrane of the endoplasmic reticulum. EGD2 may also be involved in transcription regulation. This chain is Nascent polypeptide-associated complex subunit alpha (EGD2), found in Kluyveromyces lactis (strain ATCC 8585 / CBS 2359 / DSM 70799 / NBRC 1267 / NRRL Y-1140 / WM37) (Yeast).